We begin with the raw amino-acid sequence, 1657 residues long: MGLQARRWASGSRGAAGPRRGVLQLLPLPLPLPLLLLLLLRPGAGRAAAQGEAEAPTLYLWKTGPWGRCMGDECGPGGIQTRAVWCAHVEGWTTLHTNCKQAERPNNQQNCFKVCDWHKELYDWRLGPWNQCQPVISKSLEKPLECIKGEEGIQVREIACIQKDKDIPAEDIICEYFEPKPLLEQACLIPCQQDCIVSEFSAWSECSKTCGSGLQHRTRHVVAPPQFGGSGCPNLTEFQVCQSSPCEAEELRYSLHVGPWSTCSMPHSRQVRQARRRGKNKEREKDRSKGVKDPEARELIKKKRNRNRQNRQENKYWDIQIGYQTREVMCINKTGKAADLSFCQQEKLPMTFQSCVITKECQVSEWSEWSPCSKTCHDMVSPAGTRVRTRTIRQFPIGSEKECPEFEEKEPCLSQGDGVVPCATYGWRTTEWTECRVDPLLSQQDKRRGNQTALCGGGIQTREVYCVQANENLLSQLSTHKNKEASKPMDLKLCTGPIPNTTQLCHIPCPTECEVSPWSAWGPCTYENCNDQQGKKGFKLRKRRITNEPTGGSGVTGNCPHLLEAIPCEEPACYDWKAVRLGNCEPDNGKECGPGTQVQEVVCINSDGEEVDRQLCRDAIFPIPVACDAPCPKDCVLSTWSTWSSCSHTCSGKTTEGKQIRARSILAYAGEEGGIRCPNSSALQEVRSCNEHPCTVYHWQTGPWGQCIEDTSVSSFNTTTTWNGEASCSVGMQTRKVICVRVNVGQVGPKKCPESLRPETVRPCLLPCKKDCIVTPYSDWTSCPSSCKEGDSSIRKQSRHRVIIQLPANGGRDCTDPLYEEKACEAPQACQSYRWKTHKWRRCQLVPWSVQQDSPGAQEGCGPGRQARAITCRKQDGGQAGIHECLQYAGPVPALTQACQIPCQDDCQLTSWSKFSSCNGDCGAVRTRKRTLVGKSKKKEKCKNSHLYPLIETQYCPCDKYNAQPVGNWSDCILPEGKVEVLLGMKVQGDIKECGQGYRYQAMACYDQNGRLVETSRCNSHGYIEEACIIPCPSDCKLSEWSNWSRCSKSCGSGVKVRSKWLREKPYNGGRPCPKLDHVNQAQVYEVVPCHSDCNQYLWVTEPWSICKVTFVNMRENCGEGVQTRKVRCMQNTADGPSEHVEDYLCDPEEMPLGSRVCKLPCPEDCVISEWGPWTQCVLPCNQSSFRQRSADPIRQPADEGRSCPNAVEKEPCNLNKNCYHYDYNVTDWSTCQLSEKAVCGNGIKTRMLDCVRSDGKSVDLKYCEALGLEKNWQMNTSCMVECPVNCQLSDWSPWSECSQTCGLTGKMIRRRTVTQPFQGDGRPCPSLMDQSKPCPVKPCYRWQYGQWSPCQVQEAQCGEGTRTRNISCVVSDGSADDFSKVVDEEFCADIELIIDGNKNMVLEESCSQPCPGDCYLKDWSSWSLCQLTCVNGEDLGFGGIQVRSRPVIIQELENQHLCPEQMLETKSCYDGQCYEYKWMASAWKGSSRTVWCQRSDGINVTGGCLVMSQPDADRSCNPPCSQPHSYCSETKTCHCEEGYTEVMSSNSTLEQCTLIPVVVLPTMEDKRGDVKTSRAVHPTQPSSNPAGRGRTWFLQPFGPDGRLKTWVYGVAAGAFVLLIFIVSMIYLACKKPKKPQRRQNNRLKPLTLAYDGDADM.

The first 47 residues, 1–47 (MGLQARRWASGSRGAAGPRRGVLQLLPLPLPLPLLLLLLLRPGAGRA), serve as a signal peptide directing secretion. The Extracellular segment spans residues 48–1607 (AAQGEAEAPT…FGPDGRLKTW (1560 aa)). TSP type-1 domains follow at residues 57 to 116 (TLYL…KVCD), 120 to 192 (ELYD…IPCQ), and 194 to 247 (DCIV…SPCE). N-linked (GlcNAc...) asparagine glycosylation occurs at Asn234. Residues 265-311 (MPHSRQVRQARRRGKNKEREKDRSKGVKDPEARELIKKKRNRNRQNR) form a disordered region. Positions 267–315 (HSRQVRQARRRGKNKEREKDRSKGVKDPEARELIKKKRNRNRQNRQENK) form a coiled coil. Over residues 269–280 (RQVRQARRRGKN) the composition is skewed to basic residues. Residues 281 to 299 (KEREKDRSKGVKDPEAREL) are compositionally biased toward basic and acidic residues. Residues 300–309 (IKKKRNRNRQ) are compositionally biased toward basic residues. N-linked (GlcNAc...) asparagine glycosylation occurs at Asn332. 16 consecutive TSP type-1 domains span residues 360–416 (ECQV…LSQG), 423–510 (ATYG…IPCP), 512–574 (ECEV…PACY), 634–695 (DCVL…HPCT), 696–769 (VYHW…LPCK), 771–831 (DCIV…QACQ), 832–904 (SYRW…IPCQ), 906–959 (DCQL…CPCD), 960–1033 (KYNA…IPCP), 1035–1095 (DCKL…SDCN), 1096–1163 (QYLW…LPCP), 1166–1220 (CVIS…KNCY), 1221–1284 (HYDY…VECP), 1286–1341 (NCQL…KPCY), 1342–1412 (RWQY…QPCP), and 1414–1475 (DCYL…GQCY). 3 cysteine pairs are disulfide-bonded: Cys435–Cys505, Cys455–Cys509, and Cys466–Cys494. Asn450 carries N-linked (GlcNAc...) asparagine glycosylation. N-linked (GlcNAc...) asparagine glycosylation is present at Asn500. Intrachain disulfides connect Cys635-Cys677 and Cys646-Cys650. Residue Asn679 is glycosylated (N-linked (GlcNAc...) asparagine). 7 disulfide bridges follow: Cys689-Cys694, Cys707-Cys764, Cys728-Cys768, Cys739-Cys752, Cys772-Cys814, Cys783-Cys787, and Cys824-Cys830. Asn717 is a glycosylation site (N-linked (GlcNAc...) asparagine). Asn968 carries an N-linked (GlcNAc...) asparagine glycan. Intrachain disulfides connect Cys972-Cys1028, Cys994-Cys1032, Cys1005-Cys1018, Cys1036-Cys1073, Cys1047-Cys1051, and Cys1090-Cys1094. N-linked (GlcNAc...) asparagine glycosylation is present at Asn1043. A glycan (N-linked (GlcNAc...) asparagine) is linked at Asn1182. Cys1213 and Cys1219 are oxidised to a cystine. A glycan (N-linked (GlcNAc...) asparagine) is linked at Asn1225. Cystine bridges form between Cys1232/Cys1279, Cys1240/Cys1283, Cys1251/Cys1264, Cys1287/Cys1325, Cys1298/Cys1302, Cys1335/Cys1340, Cys1351/Cys1407, Cys1358/Cys1411, Cys1369/Cys1388, Cys1415/Cys1459, Cys1426/Cys1430, and Cys1469/Cys1474. N-linked (GlcNAc...) asparagine glycosylation is present at Asn1276. The N-linked (GlcNAc...) asparagine glycan is linked to Asn1366. 2 N-linked (GlcNAc...) asparagine glycosylation sites follow: Asn1500 and Asn1547. The disordered stretch occupies residues 1570–1591 (DVKTSRAVHPTQPSSNPAGRGR). The chain crosses the membrane as a helical span at residues 1608 to 1628 (VYGVAAGAFVLLIFIVSMIYL). Residues 1629–1657 (ACKKPKKPQRRQNNRLKPLTLAYDGDADM) lie on the Cytoplasmic side of the membrane.

Post-translationally, proteolytic cleavage in the extracellular region generates a 210 kDa soluble form. Extensively N-glycosylated. In terms of tissue distribution, detected on kidney podocytes along the glomerular capillary wall (at protein level).

The protein localises to the cell membrane. It localises to the cell projection. It is found in the secreted. Plays a role in actin cytoskeleton rearrangement. Functionally, the soluble form promotes endothelial cell migration and filopodia formation during sprouting angiogenesis via a FAK-dependent mechanism. The polypeptide is Thrombospondin type-1 domain-containing protein 7A (THSD7A) (Homo sapiens (Human)).